The sequence spans 1270 residues: DNA-directed RNA polymerase subunit beta (1270 aa).

The protein belongs to the RNA polymerase beta chain family. In terms of assembly, the RNAP catalytic core consists of 2 alpha, 1 beta, 1 beta' and 1 omega subunit. When a sigma factor is associated with the core the holoenzyme is formed, which can initiate transcription.

It carries out the reaction RNA(n) + a ribonucleoside 5'-triphosphate = RNA(n+1) + diphosphate. DNA-dependent RNA polymerase catalyzes the transcription of DNA into RNA using the four ribonucleoside triphosphates as substrates. This is DNA-directed RNA polymerase subunit beta from Christiangramia forsetii (strain DSM 17595 / CGMCC 1.15422 / KT0803) (Gramella forsetii).